A 276-amino-acid chain; its full sequence is NAC domain-containing protein 67 (276 aa).

The region spanning 17–170 (LPPGFRFHPT…DWVLCRLYNK (154 aa)) is the NAC domain.

As to expression, expressed in leaf blades.

Its subcellular location is the nucleus. Functionally, probable transcription factor involved in stress response. The protein is NAC domain-containing protein 67 of Oryza sativa subsp. japonica (Rice).